A 104-amino-acid polypeptide reads, in one-letter code: MSSSRRSRSRRAGSSVPSSSSSSRTSISEDQIAELLSKLQALLPESQARNGAHRGSAARVLQETCSYIRSLHQEVDNLSETLAQLLASPDVTSDQAAVIRSLLM.

Basic residues predominate over residues 1 to 11; the sequence is MSSSRRSRSRR. Residues 1-27 are disordered; the sequence is MSSSRRSRSRRAGSSVPSSSSSSRTSI. Residues 12–27 show a composition bias toward low complexity; the sequence is AGSSVPSSSSSSRTSI. Residues 16-71 form the bHLH domain; sequence VPSSSSSSRTSISEDQIAELLSKLQALLPESQARNGAHRGSAARVLQETCSYIRSL.

Belongs to the bHLH protein family. In terms of assembly, interacts with IBH1.

In terms of biological role, atypical and probable non DNA-binding bHLH transcription factor that acts as a positive regulator of cell elongation and plant development. Binds the transcription repressor IBH1 and forms a heterodimer of antagonistic bHLH transcription factors that function downstream of BZR1 to mediate brassinosteroid regulation of cell elongation and lamina inclination. This chain is Transcription factor ILI1 (ILI1), found in Oryza sativa subsp. indica (Rice).